The following is a 231-amino-acid chain: NADH-ubiquinone oxidoreductase chain 4 (231 aa).

6 helical membrane-spanning segments follow: residues 1–21 (PIAGSMVLAAILLKLGGYGII), 34–54 (MFLPFVVLALWGAILANLTCL), 63–85 (IAYSSISHMGLVVAAIIIQTPWG), 89–111 (AMALMIAHGFTSSALFCLANTTY), 128–148 (ILPMATTWWLLTNLMNIAVPP), and 156–176 (LLIMSALFNWCPTTIIMLGLS).

It belongs to the complex I subunit 4 family.

The protein localises to the mitochondrion membrane. The enzyme catalyses a ubiquinone + NADH + 5 H(+)(in) = a ubiquinol + NAD(+) + 4 H(+)(out). Core subunit of the mitochondrial membrane respiratory chain NADH dehydrogenase (Complex I) that is believed to belong to the minimal assembly required for catalysis. Complex I functions in the transfer of electrons from NADH to the respiratory chain. The immediate electron acceptor for the enzyme is believed to be ubiquinone. The protein is NADH-ubiquinone oxidoreductase chain 4 (MT-ND4) of Agkistrodon contortrix contortrix (Southern copperhead).